We begin with the raw amino-acid sequence, 322 residues long: tRNA U34 carboxymethyltransferase (322 aa).

Carboxy-S-adenosyl-L-methionine is bound by residues lysine 92, tryptophan 106, lysine 111, glycine 131, 153–155, 181–182, methionine 196, tyrosine 200, and arginine 315; these read DPT and VE.

The protein belongs to the class I-like SAM-binding methyltransferase superfamily. CmoB family. In terms of assembly, homotetramer.

It carries out the reaction carboxy-S-adenosyl-L-methionine + 5-hydroxyuridine(34) in tRNA = 5-carboxymethoxyuridine(34) in tRNA + S-adenosyl-L-homocysteine + H(+). Its function is as follows. Catalyzes carboxymethyl transfer from carboxy-S-adenosyl-L-methionine (Cx-SAM) to 5-hydroxyuridine (ho5U) to form 5-carboxymethoxyuridine (cmo5U) at position 34 in tRNAs. The protein is tRNA U34 carboxymethyltransferase of Colwellia psychrerythraea (strain 34H / ATCC BAA-681) (Vibrio psychroerythus).